A 194-amino-acid polypeptide reads, in one-letter code: MLQPKQTSWVILAGGQARRMGGKDKGFVLFQNKPLIEHALDTLTSQTDQIAINANRSIEEYSRYAVTFSDQFSEYPGPLAGMHSGLVNMNSDWVGFIPCDSPNLPNNLVSLLCNAVKEDTDIVVAHDGEYMQPVVTLMHKRIIPKIDAFLTRGDRKIILLYKECNTVFADFSDYPNAFINLNSPQELEQFGTLL.

Residues 12–14 (LAG), Lys-25, Asn-53, Asp-70, and Asp-100 contribute to the GTP site. Asp-100 provides a ligand contact to Mg(2+).

It belongs to the MobA family. Monomer. It depends on Mg(2+) as a cofactor.

The protein localises to the cytoplasm. It catalyses the reaction Mo-molybdopterin + GTP + H(+) = Mo-molybdopterin guanine dinucleotide + diphosphate. Its function is as follows. Transfers a GMP moiety from GTP to Mo-molybdopterin (Mo-MPT) cofactor (Moco or molybdenum cofactor) to form Mo-molybdopterin guanine dinucleotide (Mo-MGD) cofactor. The protein is Molybdenum cofactor guanylyltransferase of Aliivibrio fischeri (strain MJ11) (Vibrio fischeri).